The chain runs to 141 residues: Hemoglobin subunit alpha-D (141 aa).

The Globin domain maps to 1–141 (MLTAEDKKLI…VAAVLAEKYR (141 aa)). Heme b contacts are provided by histidine 58 and histidine 87.

It belongs to the globin family. As to quaternary structure, heterotetramer of two alpha-D chains and two beta chains. In terms of tissue distribution, red blood cells.

Involved in oxygen transport from the lung to the various peripheral tissues. The polypeptide is Hemoglobin subunit alpha-D (HBAD) (Anas platyrhynchos (Mallard)).